The chain runs to 591 residues: Pentatricopeptide repeat-containing protein At2g35130 (591 aa).

PPR repeat units lie at residues 154–188, 189–223, 227–262, 263–297, 298–332, 333–367, 368–402, 403–437, 438–472, 473–507, 508–542, and 543–573; these read DVICFNLLIDAYGQKFQYKEAESLYVQLLESRYVP, TEDTYALLIKAYCMAGLIERAEVVLVEMQNHHVSP, GVTVYNAYIEGLMKRKGNTEEAIDVFQRMKRDRCKP, TTETYNLMINLYGKASKSYMSWKLYCEMRSHQCKP, NICTYTALVNAFAREGLCEKAEEIFEQLQEDGLEP, DVYVYNALMESYSRAGYPYGAAEIFSLMQHMGCEP, DRASYNIMVDAYGRAGLHSDAEAVFEEMKRLGIAP, TMKSHMLLLSAYSKARDVTKCEAIVKEMSENGVEP, DTFVLNSMLNLYGRLGQFTKMEKILAEMENGPCTA, DISTYNILINIYGKAGFLERIEELFVELKEKNFRP, DVVTWTSRIGAYSRKKLYVKCLEVFEEMIDSGCAP, and DGGTAKVLLSACSSEEQVEQVTSVLRTMHKG.

Belongs to the PPR family. P subfamily.

The chain is Pentatricopeptide repeat-containing protein At2g35130 from Arabidopsis thaliana (Mouse-ear cress).